Reading from the N-terminus, the 422-residue chain is Protein FAM53B (422 aa).

Phosphoserine is present on residues serine 118, serine 167, serine 169, serine 179, serine 212, and serine 268. Over residues serine 245–serine 268 the composition is skewed to low complexity. The disordered stretch occupies residues serine 245–glutamine 269. Residues lysine 281–arginine 284 carry the Nuclear localization signal motif.

Belongs to the FAM53 family. As to quaternary structure, interacts with CTNNB1. Detected in skeletal muscle, kidney, spleen, thyroid, testis, ovary, small intestine, colon and peripheral blood.

The protein resides in the nucleus. Acts as a regulator of Wnt signaling pathway by regulating beta-catenin (CTNNB1) nuclear localization. The protein is Protein FAM53B of Homo sapiens (Human).